Reading from the N-terminus, the 142-residue chain is Large ribosomal subunit protein uL22c (142 aa).

This sequence belongs to the universal ribosomal protein uL22 family. In terms of assembly, part of the 50S ribosomal subunit.

The protein localises to the plastid. It localises to the chloroplast. Its function is as follows. This protein binds specifically to 23S rRNA. The globular domain of the protein is located near the polypeptide exit tunnel on the outside of the subunit, while an extended beta-hairpin is found that lines the wall of the exit tunnel in the center of the 70S ribosome. The sequence is that of Large ribosomal subunit protein uL22c (rpl22) from Pinus thunbergii (Japanese black pine).